Here is a 138-residue protein sequence, read N- to C-terminus: Transcription antitermination protein NusB (138 aa).

This sequence belongs to the NusB family.

Functionally, involved in transcription antitermination. Required for transcription of ribosomal RNA (rRNA) genes. Binds specifically to the boxA antiterminator sequence of the ribosomal RNA (rrn) operons. This is Transcription antitermination protein NusB from Desulforudis audaxviator (strain MP104C).